A 223-amino-acid polypeptide reads, in one-letter code: Putative N-acetylmannosamine-6-phosphate 2-epimerase (223 aa).

This sequence belongs to the NanE family.

It catalyses the reaction an N-acyl-D-glucosamine 6-phosphate = an N-acyl-D-mannosamine 6-phosphate. The protein operates within amino-sugar metabolism; N-acetylneuraminate degradation; D-fructose 6-phosphate from N-acetylneuraminate: step 3/5. Functionally, converts N-acetylmannosamine-6-phosphate (ManNAc-6-P) to N-acetylglucosamine-6-phosphate (GlcNAc-6-P). The chain is Putative N-acetylmannosamine-6-phosphate 2-epimerase from Clostridioides difficile (strain 630) (Peptoclostridium difficile).